A 674-amino-acid chain; its full sequence is HDA1 complex subunit 2 (674 aa).

Residues 185–196 are compositionally biased toward polar residues; that stretch reads TVDSTINKDGTP. The interval 185–211 is disordered; the sequence is TVDSTINKDGTPNSVSSTSSNSNSTSY. Over residues 197–211 the composition is skewed to low complexity; sequence NSVSSTSSNSNSTSY. A coiled-coil region spans residues 468 to 637; it reads FKKKQEVEKS…RNKFLKNYIT (170 aa).

This sequence belongs to the HDA2/3 family. HDA2 subfamily. As to quaternary structure, heterodimer with HDA3. Component of the HDA1 histone deacetylase complex composed of at least one HDA1 homodimer and one HDA2/HDA3 heterodimer. Interacts with HDA1 and HDA3.

It is found in the nucleus. In terms of biological role, required for activity of HDA1 histone deacetylase complex. The HDA1 histone deacetylase complex is responsible for the deacetylation of lysine residues on the N-terminal part of the core histones (H2A, H2B, H3 and H4). Histone deacetylation gives a tag for epigenetic repression and plays an important role in transcriptional regulation, cell cycle progression and developmental events. The chain is HDA1 complex subunit 2 (HDA2) from Saccharomyces cerevisiae (strain ATCC 204508 / S288c) (Baker's yeast).